The following is a 636-amino-acid chain: 1-deoxy-D-xylulose-5-phosphate synthase (636 aa).

Residues His-75 and 116-118 each bind thiamine diphosphate; that span reads AHS. Asp-147 is a Mg(2+) binding site. Thiamine diphosphate is bound by residues 148–149, Asn-177, Tyr-288, and Glu-370; that span reads GA. Mg(2+) is bound at residue Asn-177.

The protein belongs to the transketolase family. DXPS subfamily. Homodimer. The cofactor is Mg(2+). Thiamine diphosphate serves as cofactor.

The catalysed reaction is D-glyceraldehyde 3-phosphate + pyruvate + H(+) = 1-deoxy-D-xylulose 5-phosphate + CO2. The protein operates within metabolic intermediate biosynthesis; 1-deoxy-D-xylulose 5-phosphate biosynthesis; 1-deoxy-D-xylulose 5-phosphate from D-glyceraldehyde 3-phosphate and pyruvate: step 1/1. Functionally, catalyzes the acyloin condensation reaction between C atoms 2 and 3 of pyruvate and glyceraldehyde 3-phosphate to yield 1-deoxy-D-xylulose-5-phosphate (DXP). The protein is 1-deoxy-D-xylulose-5-phosphate synthase of Ralstonia pickettii (strain 12J).